The following is a 434-amino-acid chain: Ribosomal protein uS12 methylthiotransferase RimO (434 aa).

The region spanning alanine 2–proline 112 is the MTTase N-terminal domain. Cysteine 11, cysteine 47, cysteine 76, cysteine 142, cysteine 146, and cysteine 149 together coordinate [4Fe-4S] cluster. The Radical SAM core domain maps to leucine 128–arginine 365. In terms of domain architecture, TRAM spans glutamine 368–alanine 434.

The protein belongs to the methylthiotransferase family. RimO subfamily. The cofactor is [4Fe-4S] cluster.

It localises to the cytoplasm. The enzyme catalyses L-aspartate(89)-[ribosomal protein uS12]-hydrogen + (sulfur carrier)-SH + AH2 + 2 S-adenosyl-L-methionine = 3-methylsulfanyl-L-aspartate(89)-[ribosomal protein uS12]-hydrogen + (sulfur carrier)-H + 5'-deoxyadenosine + L-methionine + A + S-adenosyl-L-homocysteine + 2 H(+). Its function is as follows. Catalyzes the methylthiolation of an aspartic acid residue of ribosomal protein uS12. The polypeptide is Ribosomal protein uS12 methylthiotransferase RimO (Thermus thermophilus (strain ATCC 27634 / DSM 579 / HB8)).